We begin with the raw amino-acid sequence, 428 residues long: Protein Wnt-8b (428 aa).

The signal sequence occupies residues 1-22 (MFYTGSFWFIFFILPAIPFCHS). An intrachain disulfide couples Cys-54 to Cys-65. N-linked (GlcNAc...) asparagine glycans are attached at residues Asn-123 and Asn-176. Intrachain disulfides connect Cys-177-Cys-185, Cys-187-Cys-205, Cys-253-Cys-267, Cys-255-Cys-262, Cys-329-Cys-367, Cys-345-Cys-360, Cys-364-Cys-406, Cys-382-Cys-397, Cys-384-Cys-394, and Cys-389-Cys-390. Ser-259 carries the O-palmitoleoyl serine lipid modification. A glycan (N-linked (GlcNAc...) asparagine) is linked at Asn-332.

It belongs to the Wnt family. Palmitoleoylation is required for efficient binding to frizzled receptors. Depalmitoleoylation leads to Wnt signaling pathway inhibition. In terms of processing, proteolytic processing by tiki1 and tiki2 promotes oxidation and formation of large disulfide-bond oligomers, leading to inactivation of wnt8b. As to expression, in adults, in brain.

Its subcellular location is the secreted. It is found in the extracellular space. It localises to the extracellular matrix. Ligand for members of the frizzled family of seven transmembrane receptors. Plays a role in the initiation of dorsal axis development. May activate a Nieuwkoop center-like signaling pathway. In Xenopus laevis (African clawed frog), this protein is Protein Wnt-8b (wnt8b).